A 66-amino-acid polypeptide reads, in one-letter code: Putative transmembrane protein ORF66 (66 aa).

Residues Met1–Asp6 are Cytoplasmic-facing. The chain crosses the membrane as a helical span at residues Thr7–Val27. The Extracellular portion of the chain corresponds to Ser28–Glu39. A helical transmembrane segment spans residues Tyr40–Gly60. Over Lys61–Ser66 the chain is Cytoplasmic.

It is found in the host membrane. This Acidianus filamentous virus 2 (isolate Italy/Pozzuoli) (AFV-2) protein is Putative transmembrane protein ORF66.